The following is a 231-amino-acid chain: DNA mismatch repair protein MutH (231 aa).

The protein belongs to the MutH family.

It localises to the cytoplasm. Its function is as follows. Sequence-specific endonuclease that cleaves unmethylated GATC sequences. It is involved in DNA mismatch repair. The polypeptide is DNA mismatch repair protein MutH (Pectobacterium atrosepticum (strain SCRI 1043 / ATCC BAA-672) (Erwinia carotovora subsp. atroseptica)).